We begin with the raw amino-acid sequence, 242 residues long: MEGWQRAFVLHSRPWSETSLMLDVFTEESGRVRLVAKGARSKRSTLKGALQPFTPLLLRFGGRGEVKTLRSAEAVSLALPLSGITLYSGLYINELLSRVLEYETRFSELFFDYLHCIQSLAGATGTPEPALRRFELALLGHLGYGVNFTHCAGSGEPVDDTMTYRYREEKGFIASVVIDNKTFTGRQLKALNAREFPDADTLRAAKRFTRMALKPYLGGKPLKSRELFRQFMPKRTVKTHYE.

The protein belongs to the RecO family. In terms of assembly, monomer.

Functionally, involved in DNA repair and RecF pathway recombination. In Shigella sonnei (strain Ss046), this protein is DNA repair protein RecO.